We begin with the raw amino-acid sequence, 105 residues long: Small ribosomal subunit protein uS10 (105 aa).

Belongs to the universal ribosomal protein uS10 family. In terms of assembly, part of the 30S ribosomal subunit.

Involved in the binding of tRNA to the ribosomes. The polypeptide is Small ribosomal subunit protein uS10 (Arthrospira platensis (Spirulina platensis)).